The sequence spans 2326 residues: MLLSPGHPLSAPALALILTLALLVRSTAPASFFGENHLEVPVPSALTRVDLLLQFSTSQPEALLLLAAGQTDHLLLQLQSGHLQVRLALGQNELSLQTPADTVLSDSTTHTVVLTVSNSWAVLSVDGVLNTSAPIPKASHLKVPYGLFVGSSGSLDLPYLKGISRPLRGCLHSAILNGRNLLRPLTPDVHEGCAEEFSAGDEVGLGFSGPHSLAAFPAWSTREEGTLEFTLTTRSQQAPLAFQAGDKRGNFIYVDIFEGHLRAVVEKGQGTMLLRNSVPVADGQPHEVSVHIDVHRLEISVDQYPTRTFNRGVLSYLEPRGSLLLGGLDTEASRHLQEHRLGLTPGAANISLVGCIEDFSVNGRRLGLRDAWLTRDMAAGCRPEEDEYEEEVYGPFEAFSTLAPEAWPVMDLPEPCVPEPGLPAVFANFTQLLTISPLVVAEGGTAWLEWRHVQPTLDLTEAELRKSQVLFSVSQGARHGELELDIPGAQTRKMFTLLDVVNRKARFVHDGSEDTSDQLMLEVSVTSRAPVPSCLRRGQIYILPIQVNPVNDPPRIVFPHGSLMVILEHTQKPLGPEIFQAYDPDSACEGLTIQLLGVSASVPVEHRDQPGEPVTEFSCRDLEAGNIVYVHRGGPAQDLTFRVSDGMQASGPATLKVVAVRPAIQILHNTGLRLAQGSAAAILPANLSVETNAVGQDVSVLFRVTGTLQFGELQKQGAGGVEGTEWWDTLAFHQRDVEQGRVRYLSTDPQHHTQDTVEDLTLEVQVGQETLSNLSFPVTIQRATVWMLQLEPLHTQNPHQETLTSAHLEASLEEEGEGGPYPHIFHYELVQAPRRGNLLLQGTRLSDGQSFSQSDLQAGRVTYRATTRTSEAAEDSFRFRVTSPPHFSPLYTFPIHIGGDPNAPVLTNVLLMVPEGGEGVLSADHLFVKSLNSASYLYEVMEQPHHGSLAWRDPKGRATPVTSFTNEDLLHGRLVYQHDDSETIEDDIPFVATRQGEGSGDMAWEEVRGVFRVAIQPVNDHAPVQTISRVFHVARGGQRLLTTDDVAFSDADSGFSDAQLVLTRKDLLFGSIVAMEEPTRPIYRFTQEDLRKKQVLFVHSGADHGWLQLQVSDGQHQATAMLEVQASEPYLHVANSSSLVVPQGGQGTIDTAVLHLDTNLDIRSGNEVHYHVTAGPHWGQLLRDGQSVTSFSQRDLLDGAILYSHNGSLSPQDTLALSVAAGPVHTSTVLQVTIALEGPLAPLQLVQHKRIYVFQGEAAEIRRDQLEVVQEAVLPADIMFSLRSPPNAGYLVMVSHGASADGPPSLDPVQRFSQEAINSGRVLYLHSRPGAWSDSFSLDVASGLGDPLEGISVELEVLPTVIPLDVQNFSVPEGGTRTLAPPLIQITGPYLGTLPGLVLQVLEPPQHGALQKEDRPQDGTLSTFSWREVEEQLIRYVHDGSETQTDGFILLANASEMDRQSQPMAFTITILPVNDQPPVITTNTGLQIWEGAIVPIPPEALRGIDSDSGPEDLVYTIEQPSNGRIALRVAPDAEAHRFTQAQLDSGLVLFSHRGALEGGFHFDLSDGVHTSPGHFFRVVAQKQVLLSLEGSRKLTVCPESVQPLSSQSLSASSSTGSDPRHLLYQVVRGPQLGRLLHAQQGSAEEALVNFTQAEVNAGNILYEHEISSEPFWEAHDTIGLLLSSSPARDLAATLAVTVSFDAACPQRPSRLWRNKGLWVPEGQRAKITVAALDAANLLASVPASQRGRHDVLFQITQFPTRGQLLVSEEPLHARRPHFLQSELTAGQLVYAHGGGGTQQDGFRFRAHLQGPTGASVAGPQTSEAFVITVRDVNERPPQPQASIPLRITRGSRAPVSRAQLSVVDPDSAPGEIEYEVQRAPHNGFLSLAGDNTGPVTHFTQADVDAGRLAFVANGSSVAGVFQLSMSDGASPPIPMSLAVDVLPSTIEVQLRAPLEVPQALGRSSLSRQQLQVISDREEPDVAYRLTQGPLYGQVLVGGQPASAFSQLQVDQGDVVFAFTNFSSSQDHFKVLALARGVNASATVNVTVQALLHVWAGGPWPQGTTLRLDPTVLDASELANRTGSMPRFRLLEGPRYGRVVRVSQGRAESRTNQLVEDFTQQDLEEGRLGLEVGRPEGRSTGPTGDRLTLELQATGVPPAVALLDFATEPYHAAKFYKVTLLSVPEAARTETEKTGKSTPTGQPGQAASSPMPTVAKSGFLGFLEANMFSVIIPVCLVLLLLALILPLLFYLRKRNKTGKHDVQVLTAKPRNGLAGDTETFRKVEPGQAIPLTTVPGQGPPPGGQPDPELLQFCRTPNPALRNGQYWV.

Positions 1-29 are cleaved as a signal peptide; sequence MLLSPGHPLSAPALALILTLALLVRSTAP. Laminin G-like domains follow at residues 30–193 and 203–381; these read ASFF…HEGC and VGLG…AAGC. Positions 30–640 are globular or compact configuration stabilized by disulfide bonds; it reads ASFFGENHLE…HRGGPAQDLT (611 aa). The interval 30–640 is neurite growth inhibition; that stretch reads ASFFGENHLE…HRGGPAQDLT (611 aa). The Extracellular portion of the chain corresponds to 30–2225; it reads ASFFGENHLE…SGFLGFLEAN (2196 aa). Asn-130 carries N-linked (GlcNAc...) asparagine glycosylation. The cysteines at positions 170 and 193 are disulfide-linked. Asn-349 carries N-linked (GlcNAc...) asparagine glycosylation. Cys-355 and Cys-381 form a disulfide bridge. N-linked (GlcNAc...) asparagine glycosylation occurs at Asn-428. 3 CSPG repeats span residues 429–524, 554–646, and 663–765; these read FTQL…LEVS, PRIV…VSDG, and AIQI…LEVQ. An interaction with COL6A2 region spans residues 575–1044; that stretch reads GPEIFQAYDP…RGGQRLLTTD (470 aa). Positions 632-1450 are interaction with COL5A1; the sequence is RGGPAQDLTF…SETQTDGFIL (819 aa). Asn-686 and Asn-773 each carry an N-linked (GlcNAc...) asparagine glycan. 2 CSPG repeats span residues 784-882 and 902-993; these read TVWM…FRVT and NAPV…FVAT. O-linked (Xyl...) (chondroitin sulfate) serine glycosylation is present at Ser-999. 9 CSPG repeats span residues 1022–1114, 1130–1220, 1242–1341, 1360–1453, 1477–1567, 1585–1683, 1708–1807, 1836–1928, and 1945–2033; these read APVQ…VSDG, YLHV…LSVA, PLQL…LDVA, TVIP…LLAN, PPVI…LSDG, LLSL…LLLS, PSRL…FRAH, PPQP…MSDG, and TIEV…VLAL. N-linked (GlcNAc...) asparagine glycosylation is found at Asn-1135 and Asn-1206. 2 N-linked (GlcNAc...) asparagine glycosylation sites follow: Asn-1368 and Asn-1453. A neurite growth inhibition region spans residues 1590–2225; that stretch reads GSRKLTVCPE…SGFLGFLEAN (636 aa). Residues 1591–2225 are cysteine-containing; it reads SRKLTVCPES…SGFLGFLEAN (635 aa). Asn-1649 carries an N-linked (GlcNAc...) asparagine glycan. Asn-1913, Asn-2020, Asn-2038, Asn-2044, and Asn-2079 each carry an N-linked (GlcNAc...) asparagine glycan. A CSPG 15 repeat occupies 2042–2151; that stretch reads TVNVTVQALL…TGDRLTLELQ (110 aa). Residues 2187–2210 form a disordered region; it reads RTETEKTGKSTPTGQPGQAASSPM. A compositionally biased stretch (polar residues) spans 2195–2210; sequence KSTPTGQPGQAASSPM. A helical transmembrane segment spans residues 2226–2250; it reads MFSVIIPVCLVLLLLALILPLLFYL. Topologically, residues 2251–2326 are cytoplasmic; the sequence is RKRNKTGKHD…PALRNGQYWV (76 aa). Thr-2256 bears the Phosphothreonine; by PKC/PRKCA mark. The PDZ-binding signature appears at 2324 to 2326; sequence YWV.

In terms of assembly, interacts with GRIP1, GRIP2 and GRIA2. Forms a ternary complex with GRIP1 and GRIA2. Interacts with ITGA4 through its chondroitin sulfate glycosaminoglycan. Interacts with BCAR1, CDC42 and ACK1. Interacts with MMP16. Interacts with the first PDZ domain of MPDZ. Interacts with PRKCA. Interacts with LGALS3 and the integrin composed of ITGB1 and ITGA3. Binds TNC, laminin-1, COL5A1 and COL6A2. Interacts with PLG and angiostatin. Binds FGF2 and PDGFA. In terms of processing, N-glycosylated. Post-translationally, O-glycosylated; contains glycosaminoglycan chondroitin sulfate which are required for proper localization and function in stress fiber formation. Involved in interaction with MMP16 and ITGA4. Phosphorylation by PRKCA regulates its subcellular location and function in cell motility. As to expression, neural cells and also extraneural tissues, especially in the developing mesenchyme.

It is found in the cell membrane. The protein resides in the apical cell membrane. Its subcellular location is the cell projection. The protein localises to the lamellipodium membrane. It localises to the cell surface. Proteoglycan playing a role in cell proliferation and migration which stimulates endothelial cells motility during microvascular morphogenesis. May also inhibit neurite outgrowth and growth cone collapse during axon regeneration. Cell surface receptor for collagen alpha 2(VI) which may confer cells ability to migrate on that substrate. Binds through its extracellular N-terminus growth factors, extracellular matrix proteases modulating their activity. May regulate MPP16-dependent degradation and invasion of type I collagen participating in melanoma cells invasion properties. May modulate the plasminogen system by enhancing plasminogen activation and inhibiting angiostatin. Also functions as a signal transducing protein by binding through its cytoplasmic C-terminus scaffolding and signaling proteins. May promote retraction fiber formation and cell polarization through Rho GTPase activation. May stimulate alpha-4, beta-1 integrin-mediated adhesion and spreading by recruiting and activating a signaling cascade through CDC42, ACK1 and BCAR1. May activate FAK and ERK1/ERK2 signaling cascades. This chain is Chondroitin sulfate proteoglycan 4 (Cspg4), found in Rattus norvegicus (Rat).